The sequence spans 472 residues: Ribosomal protein uS12 methylthiotransferase RimO (472 aa).

In terms of domain architecture, MTTase N-terminal spans 33-143; it reads NRIGFVSLGC…VLKHVHKYVP (111 aa). Cys-42, Cys-78, Cys-107, Cys-175, Cys-179, and Cys-182 together coordinate [4Fe-4S] cluster. The region spanning 161–398 is the Radical SAM core domain; it reads LTPKHYAYLK…MELQAEISAE (238 aa). In terms of domain architecture, TRAM spans 401 to 467; sequence ARFVGRTLDI…EHDLWAEVVD (67 aa).

Belongs to the methylthiotransferase family. RimO subfamily. It depends on [4Fe-4S] cluster as a cofactor.

It localises to the cytoplasm. It carries out the reaction L-aspartate(89)-[ribosomal protein uS12]-hydrogen + (sulfur carrier)-SH + AH2 + 2 S-adenosyl-L-methionine = 3-methylsulfanyl-L-aspartate(89)-[ribosomal protein uS12]-hydrogen + (sulfur carrier)-H + 5'-deoxyadenosine + L-methionine + A + S-adenosyl-L-homocysteine + 2 H(+). Its function is as follows. Catalyzes the methylthiolation of an aspartic acid residue of ribosomal protein uS12. The sequence is that of Ribosomal protein uS12 methylthiotransferase RimO from Shewanella sp. (strain W3-18-1).